Here is a 319-residue protein sequence, read N- to C-terminus: Acetyl-coenzyme A carboxylase carboxyl transferase subunit alpha (319 aa).

Residues 34 to 295 (ELEEEVSKLK…KVRLKRDLAD (262 aa)) form the CoA carboxyltransferase C-terminal domain.

Belongs to the AccA family. As to quaternary structure, acetyl-CoA carboxylase is a heterohexamer composed of biotin carboxyl carrier protein (AccB), biotin carboxylase (AccC) and two subunits each of ACCase subunit alpha (AccA) and ACCase subunit beta (AccD).

It localises to the cytoplasm. The catalysed reaction is N(6)-carboxybiotinyl-L-lysyl-[protein] + acetyl-CoA = N(6)-biotinyl-L-lysyl-[protein] + malonyl-CoA. Its pathway is lipid metabolism; malonyl-CoA biosynthesis; malonyl-CoA from acetyl-CoA: step 1/1. Functionally, component of the acetyl coenzyme A carboxylase (ACC) complex. First, biotin carboxylase catalyzes the carboxylation of biotin on its carrier protein (BCCP) and then the CO(2) group is transferred by the carboxyltransferase to acetyl-CoA to form malonyl-CoA. The polypeptide is Acetyl-coenzyme A carboxylase carboxyl transferase subunit alpha (Pseudoalteromonas translucida (strain TAC 125)).